Here is a 464-residue protein sequence, read N- to C-terminus: ATP-dependent protease ATPase subunit HslU (464 aa).

Residues valine 18, 60 to 65, aspartate 277, glutamate 342, and arginine 414 each bind ATP; that span reads GVGKTE.

This sequence belongs to the ClpX chaperone family. HslU subfamily. A double ring-shaped homohexamer of HslV is capped on each side by a ring-shaped HslU homohexamer. The assembly of the HslU/HslV complex is dependent on binding of ATP.

The protein localises to the cytoplasm. In terms of biological role, ATPase subunit of a proteasome-like degradation complex; this subunit has chaperone activity. The binding of ATP and its subsequent hydrolysis by HslU are essential for unfolding of protein substrates subsequently hydrolyzed by HslV. HslU recognizes the N-terminal part of its protein substrates and unfolds these before they are guided to HslV for hydrolysis. The protein is ATP-dependent protease ATPase subunit HslU of Lactobacillus leichmannii.